The primary structure comprises 182 residues: Lipoprotein signal peptidase (182 aa).

3 helical membrane-spanning segments follow: residues 21–41 (LLLSVAATVLALDIVTKVLAV), 74–94 (GYTWVLTLIATGVVVGIFWMG), and 98–118 (VSPWWAVGLGMILGGAMGNLV). Active-site residues include D134 and D148. A helical membrane pass occupies residues 146–166 (VADPSVVGGAILLVVLSIFGY).

Belongs to the peptidase A8 family.

It is found in the cell membrane. It carries out the reaction Release of signal peptides from bacterial membrane prolipoproteins. Hydrolyzes -Xaa-Yaa-Zaa-|-(S,diacylglyceryl)Cys-, in which Xaa is hydrophobic (preferably Leu), and Yaa (Ala or Ser) and Zaa (Gly or Ala) have small, neutral side chains.. The protein operates within protein modification; lipoprotein biosynthesis (signal peptide cleavage). Its function is as follows. This protein specifically catalyzes the removal of signal peptides from prolipoproteins. This Mycobacterium avium (strain 104) protein is Lipoprotein signal peptidase.